We begin with the raw amino-acid sequence, 148 residues long: Deoxyuridine 5'-triphosphate nucleotidohydrolase (148 aa).

Substrate contacts are provided by residues 67–69, Asn-80, 84–86, and Met-94; these read RSG and LID.

It belongs to the dUTPase family. The cofactor is Mg(2+).

It catalyses the reaction dUTP + H2O = dUMP + diphosphate + H(+). The protein operates within pyrimidine metabolism; dUMP biosynthesis; dUMP from dCTP (dUTP route): step 2/2. Its function is as follows. This enzyme is involved in nucleotide metabolism: it produces dUMP, the immediate precursor of thymidine nucleotides and it decreases the intracellular concentration of dUTP so that uracil cannot be incorporated into DNA. This is Deoxyuridine 5'-triphosphate nucleotidohydrolase from Burkholderia multivorans (strain ATCC 17616 / 249).